Reading from the N-terminus, the 1138-residue chain is Nonsense-mediated mRNA decay factor SMG7 (1138 aa).

S2 is subject to N-acetylserine. 2 TPR repeats span residues 152 to 185 and 187 to 219; these read QHCL…VPSN and QPYN…KFPF. 5 disordered regions span residues 515–612, 649–745, 838–871, 990–1090, and 1106–1138; these read ATDG…LPSR, STAH…YQQA, QPNM…KSSP, SLPA…PSME, and SSMM…NPPH. S519 carries the phosphoserine modification. Residues 525–537 are compositionally biased toward polar residues; the sequence is VLSTGRNPSNSCD. Basic and acidic residues predominate over residues 548-582; the sequence is ENIKPREVNQGRSFPPKEVKSQTELRKTPVSEARK. T575 is modified (phosphothreonine). 2 stretches are compositionally biased toward polar residues: residues 584–597 and 649–673; these read PVTQ…NSQF and STAH…SQQR. Residues 674–721 are compositionally biased toward low complexity; sequence PSGPGPMNQGPQQSQPPSQPPLTSLPAQPTAQSTSQLQVQALAQQQQS. Residues S732 and S848 each carry the phosphoserine modification. Residues 854-868 show a composition bias toward basic and acidic residues; sequence PEQDPVPRMPFEDPK. A compositionally biased stretch (polar residues) spans 990 to 999; it reads SLPASSDHST. A compositionally biased stretch (low complexity) spans 1000–1026; the sequence is PASQSPHSSNPSSLPSSPPTHNHNSAP. Basic and acidic residues predominate over residues 1037-1051; it reads DNRDRRPADRWKTDK. Positions 1063–1082 are enriched in polar residues; that stretch reads SATSSSESSWHQASTPSGTW. Positions 1118–1132 are enriched in low complexity; the sequence is QLLMQQKQKQQRGQG.

In terms of assembly, part of a complex that contains SMG5, SMG7, PPP2CA, a short isoform of UPF3A (isoform UPF3AS, but not isoform UPF3AL) and phosphorylated UPF1. Interacts with DHX34; the interaction is RNA-independent.

It localises to the cytoplasm. It is found in the nucleus. Functionally, plays a role in nonsense-mediated mRNA decay. Recruits UPF1 to cytoplasmic mRNA decay bodies. Together with SMG5 is thought to provide a link to the mRNA degradation machinery involving exonucleolytic pathways, and to serve as an adapter for UPF1 to protein phosphatase 2A (PP2A), thereby triggering UPF1 dephosphorylation. This is Nonsense-mediated mRNA decay factor SMG7 from Mus musculus (Mouse).